We begin with the raw amino-acid sequence, 140 residues long: PDZ domain-containing protein 11 (140 aa).

Residues 47-129 (IVTLKKPPGA…ISMRVRFFPY (83 aa)) form the PDZ domain.

As to quaternary structure, interacts with ATP2B1, ATP2B2, ATP2B3, ATP2B4 and ATP7A. Interacts with PLEKHA7 (via WW domains) at zonula adherens; this interaction is essential for the interaction between PLEKHA7 and the ADAM10-binding protein TSPAN33. Interacts with SLC5A6.

It localises to the cytoplasm. Its subcellular location is the cell junction. The protein resides in the adherens junction. It is found in the cell membrane. Mediates docking of ADAM10 to zonula adherens by interacting with PLEKHA7 which is required for PLEKHA7 to interact with the ADAM10-binding protein TSPAN33. This Bos taurus (Bovine) protein is PDZ domain-containing protein 11 (PDZD11).